The primary structure comprises 434 residues: Tol-Pal system protein TolB (434 aa).

A signal peptide spans 1–21 (MTVRRALALAALALAVSPALA). Residues 411–434 (GDRQTPVTSGKTDLAAPAWGPLAP) are disordered.

This sequence belongs to the TolB family. As to quaternary structure, the Tol-Pal system is composed of five core proteins: the inner membrane proteins TolA, TolQ and TolR, the periplasmic protein TolB and the outer membrane protein Pal. They form a network linking the inner and outer membranes and the peptidoglycan layer.

It is found in the periplasm. Its function is as follows. Part of the Tol-Pal system, which plays a role in outer membrane invagination during cell division and is important for maintaining outer membrane integrity. This chain is Tol-Pal system protein TolB, found in Anaeromyxobacter dehalogenans (strain 2CP-1 / ATCC BAA-258).